A 268-amino-acid chain; its full sequence is (+)-cis,trans-nepetalactol synthase NEPS2 (268 aa).

NAD(+)-binding positions include 16-22, 41-43, 65-66, Asn92, 163-167, and 196-200; these read GGASGIG, DIQ, DI, YVMSK, and VLTPL.

Belongs to the short-chain dehydrogenases/reductases (SDR) family.

It catalyses the reaction (S)-8-oxocitronellyl enol = cis-trans-nepetalactol. Functions as a non-oxidoreductive cyclase to promote the formation of cis-trans-nepetalactol. Cis-trans-nepetalactol is then oxidized by NEPS1 into cis-trans-nepetalactone, which belongs to a family of metabolites that are both insect-repellent and have euphoric effect in cats. Binds NAD(+) as classical short-chain dehydrogenase/reductase (SDR), but does not utilize it for its redox-neutral cyclase activity. This chain is (+)-cis,trans-nepetalactol synthase NEPS2, found in Nepeta racemosa (Catmint).